Consider the following 428-residue polypeptide: MSEITDVYAREILDSRGNPTLEVEVFLESGVMGRAAVPSGASTGEREALELRDGDASRYLGKGVLKAVDNVNDIIAEQLIGMEATDQVGIDRRMLELDGTEYKSTLGANAILGVSLAVAKAAAEEVGLPLYQYIGGCNARELPLPMMNILNGGAHADNNVDIQEFMIMPAGARSFSEALRMGAEVFHALKSVLKGKGYNTAVGDEGGFAPNLKSNEEALEVIMEAIAKAGYKAGEDILLALDVASSELFKDGKYFLENEAKPEKTADELIDFYENLVNKYPIISIEDGMAENDWEGWKKITDRLGKRVQLVGDDLFVTNTKILKEGISKGVANSILIKLNQIGTLTETLDAIETAKRAGYTTVISHRSGETEDTTLADLAVAVNAGQIKTGSLCRTDRVAKYNQLLRIEDELDVTAQFRGKDVFYNLR.

Q163 serves as a coordination point for (2R)-2-phosphoglycerate. Residue E205 is the Proton donor of the active site. Mg(2+)-binding residues include D242, E286, and D313. (2R)-2-phosphoglycerate-binding residues include K338, R367, S368, and K389. Residue K338 is the Proton acceptor of the active site.

It belongs to the enolase family. It depends on Mg(2+) as a cofactor.

Its subcellular location is the cytoplasm. The protein resides in the secreted. It localises to the cell surface. It carries out the reaction (2R)-2-phosphoglycerate = phosphoenolpyruvate + H2O. It functions in the pathway carbohydrate degradation; glycolysis; pyruvate from D-glyceraldehyde 3-phosphate: step 4/5. In terms of biological role, catalyzes the reversible conversion of 2-phosphoglycerate (2-PG) into phosphoenolpyruvate (PEP). It is essential for the degradation of carbohydrates via glycolysis. The polypeptide is Enolase (Geobacter sulfurreducens (strain ATCC 51573 / DSM 12127 / PCA)).